We begin with the raw amino-acid sequence, 467 residues long: tRNA dimethylallyltransferase (467 aa).

A mitochondrion-targeting transit peptide spans 1–47; sequence MAAAAAARAVPVSSGFRGLRRTLPLVVILGATGTGKSTLALQLGQRL. A dimethylallyl diphosphate-binding site is contributed by 32–37; it reads TGTGKS. 2 interaction with substrate tRNA regions span residues 55 to 58 and 183 to 187; these read DSMQ and RKVAR. The tract at residues 221 to 230 is core aggregation region; that stretch reads FPNPCILWLH. An interaction with isopentenylpyrophosphate transferase region spans residues 233–255; it reads QAVLDERLDKRVDDMLAAGLLEE. Interaction with substrate tRNA stretches follow at residues 281–283 and 313–331; these read QSI and ALKQ…WVKN. The segment at 395-425 adopts a Matrin-type zinc-finger fold; it reads HMCDLCDRIIIGDREWAAHLKSKSHLHQLKK. A disordered region spans residues 432-467; that stretch reads DAVSATGSQSNSPDCDPERIEGESSGQHNQELKASV. Phosphoserine is present on residues S443 and S455.

The protein belongs to the IPP transferase family.

It is found in the mitochondrion. Its subcellular location is the cytoplasm. The protein resides in the nucleus. It carries out the reaction adenosine(37) in tRNA + dimethylallyl diphosphate = N(6)-dimethylallyladenosine(37) in tRNA + diphosphate. Functionally, catalyzes the transfer of a dimethylallyl group onto the adenine at position 37 of both cytosolic and mitochondrial tRNAs, leading to the formation of N6-(dimethylallyl)adenosine (i6A37). Mediates modification of a limited subset of tRNAs: tRNA(Ser)(AGA), tRNA(Ser)(CGA), tRNA(Ser)(UGA), as well as partial modification of the selenocysteine tRNA(Ser)(UCA). TRIT1 is therefore required for selenoprotein expression. The sequence is that of tRNA dimethylallyltransferase (Trit1) from Mus musculus (Mouse).